Reading from the N-terminus, the 106-residue chain is Adipokinetic hormone/corazonin-related peptide (106 aa).

A signal peptide spans 1 to 25 (MRNSIYKLIMFAVLCMVLTSSLSYA). Residue Gln-26 is modified to Pyrrolidone carboxylic acid. The residue at position 35 (Ala-35) is an Alanine amide. Positions 39-106 (SLAEAAQSTG…GLPLFSNGHL (68 aa)) are excised as a propeptide.

This sequence belongs to the AKH/HRTH/RPCH family. As to expression, only expressed in the head and thorax body segments of adults. Is more expressed in adult males than in females.

It is found in the secreted. In terms of biological role, neuropeptide with neuromodulator or neurotransmitter role that activates the adipokinetic hormone/corazonin-related peptide receptor (ACPR). May function in regulation of post-ecdysis activities. Does not activate the A.gambiae adipokinetic hormone (AKH) and corazonin (CRZ) receptors. This chain is Adipokinetic hormone/corazonin-related peptide, found in Aedes aegypti (Yellowfever mosquito).